Consider the following 313-residue polypeptide: Biotin synthase (313 aa).

Residues 28–258 (NFGNDIELCS…LFPQARLRLS (231 aa)) enclose the Radical SAM core domain. Residues C46, C50, and C53 each coordinate [4Fe-4S] cluster. Residues C90, C121, C181, and R256 each contribute to the [2Fe-2S] cluster site.

Belongs to the radical SAM superfamily. Biotin synthase family. Homodimer. [4Fe-4S] cluster serves as cofactor. The cofactor is [2Fe-2S] cluster.

The catalysed reaction is (4R,5S)-dethiobiotin + (sulfur carrier)-SH + 2 reduced [2Fe-2S]-[ferredoxin] + 2 S-adenosyl-L-methionine = (sulfur carrier)-H + biotin + 2 5'-deoxyadenosine + 2 L-methionine + 2 oxidized [2Fe-2S]-[ferredoxin]. The protein operates within cofactor biosynthesis; biotin biosynthesis; biotin from 7,8-diaminononanoate: step 2/2. Functionally, catalyzes the conversion of dethiobiotin (DTB) to biotin by the insertion of a sulfur atom into dethiobiotin via a radical-based mechanism. This is Biotin synthase from Francisella tularensis subsp. mediasiatica (strain FSC147).